Consider the following 143-residue polypeptide: Peptide methionine sulfoxide reductase MsrB (143 aa).

Residues 16-139 (DAELRRRLTP…NSAALNFESR (124 aa)) form the MsrB domain. Residues Cys55, Cys58, Cys104, and Cys107 each contribute to the Zn(2+) site. Cys128 (nucleophile) is an active-site residue.

The protein belongs to the MsrB Met sulfoxide reductase family. Requires Zn(2+) as cofactor.

The enzyme catalyses L-methionyl-[protein] + [thioredoxin]-disulfide + H2O = L-methionyl-(R)-S-oxide-[protein] + [thioredoxin]-dithiol. The sequence is that of Peptide methionine sulfoxide reductase MsrB from Burkholderia ambifaria (strain ATCC BAA-244 / DSM 16087 / CCUG 44356 / LMG 19182 / AMMD) (Burkholderia cepacia (strain AMMD)).